A 141-amino-acid polypeptide reads, in one-letter code: Putative phosphatidylglycerol/phosphatidylinositol transfer protein DDB_G0278295 (141 aa).

The N-terminal stretch at 1-19 (MRLLLALFFVLALVSPSFT) is a signal peptide. Asn-82 and Asn-104 each carry an N-linked (GlcNAc...) asparagine glycan.

It belongs to the NPC2 family. Monomer.

Functionally, catalyzes the intermembrane transfer of phosphatidylglycerol and phosphatidylinositol. The chain is Putative phosphatidylglycerol/phosphatidylinositol transfer protein DDB_G0278295 from Dictyostelium discoideum (Social amoeba).